A 260-amino-acid polypeptide reads, in one-letter code: Thiazole synthase (260 aa).

K102 functions as the Schiff-base intermediate with DXP in the catalytic mechanism. 1-deoxy-D-xylulose 5-phosphate is bound by residues G163, 189-190 (AG), and 211-212 (NT).

Belongs to the ThiG family. As to quaternary structure, homotetramer. Forms heterodimers with either ThiH or ThiS.

Its subcellular location is the cytoplasm. It catalyses the reaction [ThiS sulfur-carrier protein]-C-terminal-Gly-aminoethanethioate + 2-iminoacetate + 1-deoxy-D-xylulose 5-phosphate = [ThiS sulfur-carrier protein]-C-terminal Gly-Gly + 2-[(2R,5Z)-2-carboxy-4-methylthiazol-5(2H)-ylidene]ethyl phosphate + 2 H2O + H(+). It participates in cofactor biosynthesis; thiamine diphosphate biosynthesis. Catalyzes the rearrangement of 1-deoxy-D-xylulose 5-phosphate (DXP) to produce the thiazole phosphate moiety of thiamine. Sulfur is provided by the thiocarboxylate moiety of the carrier protein ThiS. In vitro, sulfur can be provided by H(2)S. The chain is Thiazole synthase from Geobacter sp. (strain M21).